The sequence spans 457 residues: tRNA modification GTPase MnmE (457 aa).

Positions 25, 87, and 126 each coordinate (6S)-5-formyl-5,6,7,8-tetrahydrofolate. Residues 223-377 (GISTAIIGRP…IEERINNLFF (155 aa)) enclose the TrmE-type G domain. Asparagine 233 contributes to the K(+) binding site. Residues 233 to 238 (NVGKSS), 252 to 258 (TDIAGTT), and 277 to 280 (DTAG) each bind GTP. Serine 237 lines the Mg(2+) pocket. 3 residues coordinate K(+): threonine 252, isoleucine 254, and threonine 257. Residue threonine 258 coordinates Mg(2+). Lysine 457 serves as a coordination point for (6S)-5-formyl-5,6,7,8-tetrahydrofolate.

It belongs to the TRAFAC class TrmE-Era-EngA-EngB-Septin-like GTPase superfamily. TrmE GTPase family. In terms of assembly, homodimer. Heterotetramer of two MnmE and two MnmG subunits. It depends on K(+) as a cofactor.

Its subcellular location is the cytoplasm. Its function is as follows. Exhibits a very high intrinsic GTPase hydrolysis rate. Involved in the addition of a carboxymethylaminomethyl (cmnm) group at the wobble position (U34) of certain tRNAs, forming tRNA-cmnm(5)s(2)U34. In Streptococcus pneumoniae serotype 2 (strain D39 / NCTC 7466), this protein is tRNA modification GTPase MnmE.